A 710-amino-acid polypeptide reads, in one-letter code: Polyribonucleotide nucleotidyltransferase (710 aa).

Residues aspartate 489 and aspartate 495 each contribute to the Mg(2+) site. The KH domain maps to 556–615 (PKIDTIKIDVDKIKVVIGKGGETIDKIIAETGVKIDIDDEGNVSIYSSDQAAINRTKEII). The 69-residue stretch at 625-693 (GEVYHAKVVR…EKGRVDASMK (69 aa)) folds into the S1 motif domain. Positions 691 to 710 (SMKALIPRPPKPEKKEEKHD) are disordered. The span at 700–710 (PKPEKKEEKHD) shows a compositional bias: basic and acidic residues.

It belongs to the polyribonucleotide nucleotidyltransferase family. The cofactor is Mg(2+).

Its subcellular location is the cytoplasm. It catalyses the reaction RNA(n+1) + phosphate = RNA(n) + a ribonucleoside 5'-diphosphate. Involved in mRNA degradation. Catalyzes the phosphorolysis of single-stranded polyribonucleotides processively in the 3'- to 5'-direction. The sequence is that of Polyribonucleotide nucleotidyltransferase from Streptococcus pyogenes serotype M2 (strain MGAS10270).